The following is a 328-amino-acid chain: GMP reductase (328 aa).

The active-site Thioimidate intermediate is the Cys-176. Ile-205–Ile-228 is an NADP(+) binding site.

It belongs to the IMPDH/GMPR family. GuaC type 2 subfamily.

It carries out the reaction IMP + NH4(+) + NADP(+) = GMP + NADPH + 2 H(+). In terms of biological role, catalyzes the irreversible NADPH-dependent deamination of GMP to IMP. It functions in the conversion of nucleobase, nucleoside and nucleotide derivatives of G to A nucleotides, and in maintaining the intracellular balance of A and G nucleotides. The sequence is that of GMP reductase from Streptococcus pneumoniae serotype 4 (strain ATCC BAA-334 / TIGR4).